Reading from the N-terminus, the 116-residue chain is MGTSELLKHIYDINLSYLLLAQRLINDEKASAMFRLGIDETMADALAQLTLPQMVKLAETNQLVCQFRFNDHQTIERLTKESRVDDLQQIHTGILLSSHLLQELSAKDGSATKKRA.

It belongs to the FlhD family. Homodimer; disulfide-linked. Forms a heterohexamer composed of two FlhC and four FlhD subunits. Each FlhC binds a FlhD dimer, forming a heterotrimer, and a hexamer assembles by dimerization of two heterotrimers.

It is found in the cytoplasm. In terms of biological role, functions in complex with FlhC as a master transcriptional regulator that regulates transcription of several flagellar and non-flagellar operons by binding to their promoter region. Activates expression of class 2 flagellar genes, including fliA, which is a flagellum-specific sigma factor that turns on the class 3 genes. Also regulates genes whose products function in a variety of physiological pathways. In Serratia proteamaculans (strain 568), this protein is Flagellar transcriptional regulator FlhD.